A 362-amino-acid polypeptide reads, in one-letter code: Histidine protein methyltransferase 1 homolog (362 aa).

Positions T18 to K88 are disordered. A compositionally biased stretch (basic and acidic residues) spans Q30–W51. The span at K52–T65 shows a compositional bias: polar residues. Phosphoserine is present on residues S62 and S67. Positions D73–K82 are enriched in basic and acidic residues. H144 bears the Tele-methylhistidine mark. Residues I158 to T162, G185, and Q206 to Y208 each bind S-adenosyl-L-methionine. The Nuclear localization signal motif lies at P237–R243. S-adenosyl-L-methionine-binding positions include G259–W261 and S283.

The protein belongs to the methyltransferase superfamily. METTL18 family. As to quaternary structure, interacts with GRWD1 and members of the heat shock protein 90 and 70 families; these proteins may possibly be methylation substrates for the enzyme. Monomethylated at His-144 through automethylation. Automethylation at His-144 positively regulates the methyltransferase activity toward RPL3. Probably methylated on other residues.

The protein resides in the cytoplasm. Its subcellular location is the cytosol. The protein localises to the nucleus. It is found in the nucleolus. It catalyses the reaction L-histidyl-[protein] + S-adenosyl-L-methionine = N(tele)-methyl-L-histidyl-[protein] + S-adenosyl-L-homocysteine + H(+). In terms of biological role, protein-L-histidine N-tele-methyltransferase that specifically monomethylates RPL3, thereby regulating translation elongation. Histidine methylation of RPL3 regulates translation elongation by slowing ribosome traversal on tyrosine codons: slower elongation provides enough time for proper folding of synthesized proteins and prevents cellular aggregation of tyrosine-rich proteins. This is Histidine protein methyltransferase 1 homolog from Mus musculus (Mouse).